A 309-amino-acid polypeptide reads, in one-letter code: Dioxygenase af480 (309 aa).

Fe cation is bound by residues His153, Asp155, and His228.

The protein belongs to the PhyH family. The cofactor is Fe cation.

The catalysed reaction is 5-dehydro-6-demethoxyfumagillol + 2-oxoglutarate + O2 = 5-dehydro-6-demethoxy-6-hydroxyfumagillol + succinate + CO2. Its pathway is secondary metabolite biosynthesis; terpenoid biosynthesis. In terms of biological role, dioxygenase; part of the gene cluster that mediates the biosynthesis of fumagillin, a meroterpenoid that has numerous biological activities including irreversible inhibition of human type 2 methionine aminopeptidase (METAP2). Within the pathway, the dioxygenase af480 acts as a 5-dehydro-6-demethoxyfumagillol dioxygenase that hydroylates 5-keto-demethoxyfumagillol at position C-6. The pathway begins with the conversion of farnesyl pyrophosphate (FPP) to beta-trans-bergamotene by the membrane-bound beta-trans-bergamotene synthase af520. The multifunctional cytochrome P450 monooxygenase af510 then converts beta-trans-bergamotene into 5-keto-demethoxyfumagillol via several oxydation steps. 5-keto-demethoxyfumagillol is then subjected to successive C-6 hydroxylation and O-methylation by the dioxygenase af480 and O-methyltransferase af390-400, respectively, to yield 5-keto-fumagillol, which is then stereoselectively reduced by the keto-reductase af490 to 5R-hydroxy-seco-sesquiterpene. The next step is the polyketide transferase af380-catalyzed transfer of a dodecapentaenoyl group synthesized by the polyketide synthase af370 onto 5R-hydroxy-seco-sesquiterpene which leads to the production of prefumagillin. Finally, oxidative cleavage by the monooxygenase af470 converts prefumagillin to fumagillin. This Aspergillus fumigatus (strain ATCC MYA-4609 / CBS 101355 / FGSC A1100 / Af293) (Neosartorya fumigata) protein is Dioxygenase af480.